The primary structure comprises 94 residues: C-C motif chemokine 26 (94 aa).

Residues 1–23 form the signal peptide; it reads MKSFPVAFLVLLIFILSVHRGVT. Disulfide bonds link Cys-33-Cys-57 and Cys-34-Cys-73.

It belongs to the intercrine beta (chemokine CC) family. As to quaternary structure, monomer.

It localises to the secreted. Chemoattractant for eosinophils and basophils. Acts as a ligand for C-C chemokine receptor CCR3 which triggers Ca(2+) mobilization in eosinophils. Also acts as a ligand for CX3C chemokine receptor CX3CR1, inducing cell chemotaxis. The sequence is that of C-C motif chemokine 26 from Canis lupus familiaris (Dog).